We begin with the raw amino-acid sequence, 194 residues long: Inosine triphosphate pyrophosphatase (194 aa).

An N-acetylalanine modification is found at Ala-2. Thr-14 to Lys-19 serves as a coordination point for ITP. Glu-44 lines the Mg(2+) pocket. Residues Lys-56, Asp-72–Thr-73, Lys-89, Phe-149–Asp-152, Lys-172, and His-177–Arg-178 contribute to the ITP site.

The protein belongs to the HAM1 NTPase family. In terms of assembly, homodimer. Mg(2+) is required as a cofactor. In terms of tissue distribution, ubiquitous. Highly expressed in heart, liver, sex glands, thyroid and adrenal gland.

It localises to the cytoplasm. The enzyme catalyses ITP + H2O = IMP + diphosphate + H(+). It carries out the reaction dITP + H2O = dIMP + diphosphate + H(+). It catalyses the reaction XTP + H2O = XMP + diphosphate + H(+). The catalysed reaction is N(6)-hydroxy-dATP + H2O = N(6)-hydroxy-dAMP + diphosphate + H(+). Its function is as follows. Pyrophosphatase that hydrolyzes the non-canonical purine nucleotides inosine triphosphate (ITP), deoxyinosine triphosphate (dITP) as well as 2'-deoxy-N-6-hydroxylaminopurine triphosphate (dHAPTP) and xanthosine 5'-triphosphate (XTP) to their respective monophosphate derivatives. The enzyme does not distinguish between the deoxy- and ribose forms. Probably excludes non-canonical purines from RNA and DNA precursor pools, thus preventing their incorporation into RNA and DNA and avoiding chromosomal lesions. The chain is Inosine triphosphate pyrophosphatase from Homo sapiens (Human).